We begin with the raw amino-acid sequence, 474 residues long: Homeobox protein PKNOX2 (474 aa).

Positions M1–A42 are disordered. Residues D26–S38 are compositionally biased toward polar residues. An MEIS N-terminal domain is found at G96–D179. Positions K291 to M350 form a DNA-binding region, homeobox. 3 disordered regions span residues L351–P371, L385–L405, and A423–E474. Residues K361 to P371 show a composition bias toward basic residues. Positions L429 to E456 are enriched in acidic residues.

It belongs to the TALE/MEIS homeobox family.

The protein localises to the nucleus. This chain is Homeobox protein PKNOX2 (Pknox2), found in Mus musculus (Mouse).